Here is a 309-residue protein sequence, read N- to C-terminus: MPSAGLCSCWGGRVLPLLLAYVCYLLLGATIFQLLERQAEAQSRDQFQLEKLRFLENYTCLDQWAMEQFVQVIMEAWVKGVNPKGNSTNPSNWDFGSSFFFAGTVVTTIGYGNLAPSTEAGQVFCVFYALLGIPLNVIFLNHLGTGLRAHLAAIERWEDRPRRSQVLQVLGLALFLTLGTLVILIFPPMVFSHVEGWSFSEGFYFAFITLSTIGFGDYVVGTDPSKHYISVYRSLAAIWILLGLAWLALILPLGPLLLHRCCQLWLLSLRQGCGAKAAPGRRPRRGSTAARGVQVTPQDFPISKKGLGS.

Topologically, residues 1–13 (MPSAGLCSCWGGR) are cytoplasmic. A helical membrane pass occupies residues 14 to 34 (VLPLLLAYVCYLLLGATIFQL). Residues 98–116 (SFFFAGTVVTTIGYGNLAP) constitute an intramembrane region (pore-forming). Residues Thr-108, Ile-109, Gly-110, and Tyr-111 each contribute to the K(+) site. The interval 108-113 (TIGYGN) is selectivity filter 1. A helical membrane pass occupies residues 120-140 (AGQVFCVFYALLGIPLNVIFL). At 141 to 165 (NHLGTGLRAHLAAIERWEDRPRRSQ) the chain is on the cytoplasmic side. The helical transmembrane segment at 166–186 (VLQVLGLALFLTLGTLVILIF) threads the bilayer. An intramembrane region (pore-forming) is located at residues 202–221 (GFYFAFITLSTIGFGDYVVG). Positions 212, 213, 214, and 215 each coordinate K(+). The tract at residues 212–217 (TIGFGD) is selectivity filter 2. The chain crosses the membrane as a helical span at residues 238-258 (IWILLGLAWLALILPLGPLLL). Residues 259–309 (HRCCQLWLLSLRQGCGAKAAPGRRPRRGSTAARGVQVTPQDFPISKKGLGS) lie on the Cytoplasmic side of the membrane.

This sequence belongs to the two pore domain potassium channel (TC 1.A.1.8) family. Homodimer; disulfide-linked. Heterodimer with KCNK17 and KCNK5. Highly expressed in pancreas, in both endocrine (alpha, beta, gamma, delta, and epsilon) and exocrine (acinar and ductal) cells. Expressed in pacreatic beta-cells (at protein level). Expressed in pacreatic delta-cells (at protein level). Not detectable in the other tissues tested.

It is found in the endoplasmic reticulum membrane. The protein resides in the cell membrane. It localises to the mitochondrion inner membrane. The catalysed reaction is K(+)(in) = K(+)(out). It catalyses the reaction Rb(+)(in) = Rb(+)(out). The enzyme catalyses Cs(+)(in) = Cs(+)(out). Its activity is regulated as follows. The channel conductance is stimulated by extracellular alkaline pH. Inhibited by Ba(2+) ions, quinine, quinidine, chloroform and halothane. Its function is as follows. K(+) channel that conducts voltage-dependent outward rectifying currents upon membrane depolarization. Voltage sensing is coupled to K(+) electrochemical gradient in an 'ion flux gating' mode where outward but not inward ion flow opens the gate. Homo- and heterodimerizes to form functional channels with distinct regulatory and gating properties. In pancreatic islets, conducts K(+) countercurrents for Ca(2+) release from the endoplasmic reticulum (ER) and regulates the frequency and duration of cytosolic Ca(2+) oscillations coupled to secretion of pancreatic hormones. In pancreatic beta cells, drives ER Ca(2+) efflux, which in turn activates Ca(2+)-dependent plasma membrane K(+) slow currents and cytosolic Ca(2+) influx, overall contributing to synchronous cytosolic Ca(2+) oscillations. Limits glucose-induced cytosolic Ca(2+) oscillations coupled to second-phase INS secretion. Contributes to beta cell adaptation to acute inflammation by maintaining normal cytosolic Ca(2+) levels and INS secretion. May regulate beta cell mitochondrial Ca(2+) levels either indirectly via ER Ca(2+) efflux or directly by hyperpolarizing the mitochondrial membrane potential. Limits mitochondrial Ca(2+) oscillations and ATP production involved in glucose homeostasis upon metabolic stress. In pancreatic delta cells, limits Ca(2+)-induced Ca(2+)-release involved in somatostatin secretion and modulates islet paracrine signaling involved in glucagon secretion. Permeable to other monovalent cations such as Rb(+) and Cs(+). This is Potassium channel subfamily K member 16 from Homo sapiens (Human).